A 145-amino-acid chain; its full sequence is Peptidyl-prolyl cis-trans isomerase (145 aa).

A PPIase cyclophilin-type domain is found at 1-145 (MTQAILETEK…LSVKIVTDAA (145 aa)).

Belongs to the cyclophilin-type PPIase family.

It catalyses the reaction [protein]-peptidylproline (omega=180) = [protein]-peptidylproline (omega=0). Its function is as follows. PPIases accelerate the folding of proteins. It catalyzes the cis-trans isomerization of proline imidic peptide bonds in oligopeptides. The polypeptide is Peptidyl-prolyl cis-trans isomerase (rot) (Synechococcus elongatus (strain ATCC 33912 / PCC 7942 / FACHB-805) (Anacystis nidulans R2)).